Reading from the N-terminus, the 143-residue chain is NADH-quinone oxidoreductase subunit A (143 aa).

Transmembrane regions (helical) follow at residues 7–27 (GFGN…GGYL), 63–83 (FYVV…LYPW), and 93–113 (FALF…AYAW).

It belongs to the complex I subunit 3 family. As to quaternary structure, NDH-1 is composed of 14 different subunits. Subunits NuoA, H, J, K, L, M, N constitute the membrane sector of the complex.

Its subcellular location is the cell inner membrane. The enzyme catalyses a quinone + NADH + 5 H(+)(in) = a quinol + NAD(+) + 4 H(+)(out). Its function is as follows. NDH-1 shuttles electrons from NADH, via FMN and iron-sulfur (Fe-S) centers, to quinones in the respiratory chain. The immediate electron acceptor for the enzyme in this species is believed to be a menaquinone. Couples the redox reaction to proton translocation (for every two electrons transferred, four hydrogen ions are translocated across the cytoplasmic membrane), and thus conserves the redox energy in a proton gradient. This chain is NADH-quinone oxidoreductase subunit A, found in Chlorobium limicola (strain DSM 245 / NBRC 103803 / 6330).